We begin with the raw amino-acid sequence, 278 residues long: Large ribosomal subunit protein uL2 (278 aa).

The interval 211-278 (KRWLGKRPQS…LIIRRRKGSK (68 aa)) is disordered. The segment covering 258-270 (KTRDTKKASEKLI) has biased composition (basic and acidic residues).

It belongs to the universal ribosomal protein uL2 family. In terms of assembly, part of the 50S ribosomal subunit. Forms a bridge to the 30S subunit in the 70S ribosome.

One of the primary rRNA binding proteins. Required for association of the 30S and 50S subunits to form the 70S ribosome, for tRNA binding and peptide bond formation. It has been suggested to have peptidyltransferase activity; this is somewhat controversial. Makes several contacts with the 16S rRNA in the 70S ribosome. The protein is Large ribosomal subunit protein uL2 of Lactobacillus helveticus (strain DPC 4571).